The chain runs to 181 residues: Crossover junction endodeoxyribonuclease RuvC (181 aa).

Active-site residues include D7, E67, and D139. Mg(2+)-binding residues include D7, E67, and D139.

Belongs to the RuvC family. Homodimer which binds Holliday junction (HJ) DNA. The HJ becomes 2-fold symmetrical on binding to RuvC with unstacked arms; it has a different conformation from HJ DNA in complex with RuvA. In the full resolvosome a probable DNA-RuvA(4)-RuvB(12)-RuvC(2) complex forms which resolves the HJ. The cofactor is Mg(2+).

Its subcellular location is the cytoplasm. The catalysed reaction is Endonucleolytic cleavage at a junction such as a reciprocal single-stranded crossover between two homologous DNA duplexes (Holliday junction).. In terms of biological role, the RuvA-RuvB-RuvC complex processes Holliday junction (HJ) DNA during genetic recombination and DNA repair. Endonuclease that resolves HJ intermediates. Cleaves cruciform DNA by making single-stranded nicks across the HJ at symmetrical positions within the homologous arms, yielding a 5'-phosphate and a 3'-hydroxyl group; requires a central core of homology in the junction. The consensus cleavage sequence is 5'-(A/T)TT(C/G)-3'. Cleavage occurs on the 3'-side of the TT dinucleotide at the point of strand exchange. HJ branch migration catalyzed by RuvA-RuvB allows RuvC to scan DNA until it finds its consensus sequence, where it cleaves and resolves the cruciform DNA. This chain is Crossover junction endodeoxyribonuclease RuvC, found in Cupriavidus taiwanensis (strain DSM 17343 / BCRC 17206 / CCUG 44338 / CIP 107171 / LMG 19424 / R1) (Ralstonia taiwanensis (strain LMG 19424)).